Consider the following 339-residue polypeptide: Fructose-1,6-bisphosphatase class 1 (339 aa).

Residues Glu94, Asp116, Leu118, and Asp119 each contribute to the Mg(2+) site. Substrate is bound by residues 119 to 122 (DGSS), Asn210, and Lys276. Mg(2+) is bound at residue Glu282.

Belongs to the FBPase class 1 family. Homotetramer. The cofactor is Mg(2+).

It localises to the cytoplasm. The catalysed reaction is beta-D-fructose 1,6-bisphosphate + H2O = beta-D-fructose 6-phosphate + phosphate. The protein operates within carbohydrate biosynthesis; gluconeogenesis. This Burkholderia ambifaria (strain MC40-6) protein is Fructose-1,6-bisphosphatase class 1.